Consider the following 291-residue polypeptide: Elongation factor Ts, mitochondrial (291 aa).

It belongs to the EF-Ts family.

It localises to the mitochondrion. In terms of biological role, associates with the EF-Tu.GDP complex and induces the exchange of GDP to GTP. It remains bound to the aminoacyl-tRNA.EF-Tu.GTP complex up to the GTP hydrolysis stage on the ribosome. The sequence is that of Elongation factor Ts, mitochondrial from Nematostella vectensis (Starlet sea anemone).